Consider the following 44-residue polypeptide: uncharacterized protein (44 aa).

The signal sequence occupies residues 1 to 16 (MRISLLAVILALLFVA).

This is an uncharacterized protein from Helicobacter pylori (strain ATCC 700392 / 26695) (Campylobacter pylori).